Reading from the N-terminus, the 443-residue chain is Deoxyguanosinetriphosphate triphosphohydrolase-like protein (443 aa).

The region spanning 61 to 246 is the HD domain; it reads RLTHSLEVAC…MEAADDICYG (186 aa).

The protein belongs to the dGTPase family. Type 3 subfamily.

The chain is Deoxyguanosinetriphosphate triphosphohydrolase-like protein from Pseudomonas aeruginosa (strain LESB58).